The sequence spans 473 residues: Spliceosome-associated protein CWC27 homolog (473 aa).

Position 2 is an N-acetylserine (S2). The 156-residue stretch at 11–166 (TNGKVLLKTT…NPHKIKSCEV (156 aa)) folds into the PPIase cyclophilin-type domain. A compositionally biased stretch (basic and acidic residues) spans 177 to 193 (REIKRPKKEKPEEEVKK). 2 disordered regions span residues 177 to 386 (REIK…EDQT) and 399 to 473 (QAIA…KERR). Positions 206-230 (SFGEEAEEEEEEVNRVSQSMKGKSK) form a coiled coil. Residues 231–241 (SSHDLLKDDPH) show a composition bias toward basic and acidic residues. A compositionally biased stretch (acidic residues) spans 257 to 266 (GDLDDGGEGE). Composition is skewed to basic and acidic residues over residues 267-287 (SAEH…ERIA), 305-348 (EVEK…KRSE), and 360-372 (EYRR…EALR). Residues 305-378 (EVEKKSVNRS…EALRKQQSKK (74 aa)) adopt a coiled-coil conformation. At S347 the chain carries Phosphoserine. Acidic residues predominate over residues 405–419 (PENDIPETEVEDDEG). Basic and acidic residues-rich tracts occupy residues 426 to 438 (QFED…KDAS) and 458 to 473 (RREE…KERR).

This sequence belongs to the cyclophilin-type PPIase family. Part of the activated spliceosome B/catalytic step 1 spliceosome, one of the forms of the spliceosome which has a well-formed active site but still cannot catalyze the branching reaction and is composed at least of 52 proteins, the U2, U5 and U6 snRNAs and the pre-mRNA. Recruited during early steps of activated spliceosome B maturation, it is probably one of the first proteins released from this complex as he matures to the spliceosome C complex. Component of the minor spliceosome, which splices U12-type introns.

The protein localises to the nucleus. Functionally, as part of the spliceosome, plays a role in pre-mRNA splicing. Probable inactive PPIase with no peptidyl-prolyl cis-trans isomerase activity. As a component of the minor spliceosome, involved in the splicing of U12-type introns in pre-mRNAs. In Pongo abelii (Sumatran orangutan), this protein is Spliceosome-associated protein CWC27 homolog.